The following is a 235-amino-acid chain: Phosphoribosylaminoimidazole-succinocarboxamide synthase (235 aa).

This sequence belongs to the SAICAR synthetase family.

It carries out the reaction 5-amino-1-(5-phospho-D-ribosyl)imidazole-4-carboxylate + L-aspartate + ATP = (2S)-2-[5-amino-1-(5-phospho-beta-D-ribosyl)imidazole-4-carboxamido]succinate + ADP + phosphate + 2 H(+). Its pathway is purine metabolism; IMP biosynthesis via de novo pathway; 5-amino-1-(5-phospho-D-ribosyl)imidazole-4-carboxamide from 5-amino-1-(5-phospho-D-ribosyl)imidazole-4-carboxylate: step 1/2. The chain is Phosphoribosylaminoimidazole-succinocarboxamide synthase from Clostridium beijerinckii (strain ATCC 51743 / NCIMB 8052) (Clostridium acetobutylicum).